The sequence spans 176 residues: Non-specific lipid transfer protein GPI-anchored 12 (176 aa).

The signal sequence occupies residues 1 to 20; the sequence is MLTTNTLAVLLLLFLSLCSG. Cystine bridges form between C40–C83, C50–C67, C68–C110, and C81–C120. N46 carries N-linked (GlcNAc...) asparagine glycosylation. N149 is lipidated: GPI-anchor amidated asparagine. The propeptide at 150-176 is removed in mature form; that stretch reads GAMTTKYCGVALNSLALLLLFTFLSLS.

Belongs to the plant LTP family. As to expression, preferentially expressed in the endodermis of hypocotyls and roots of seedlings, and in petals and anthers of inflorescences. May also be expressed in siliques, carpels and pedicels.

The protein resides in the cell membrane. Its function is as follows. Probable lipid transfer protein. This is Non-specific lipid transfer protein GPI-anchored 12 from Arabidopsis thaliana (Mouse-ear cress).